The sequence spans 114 residues: T cell receptor alpha variable 12-3 (114 aa).

Positions 1-21 (MMKSLRVLLVILWLQLSWVWS) are cleaved as a signal peptide. In terms of domain architecture, Ig-like spans 24–114 (KEVEQDPGPL…DSATYLCAMS (91 aa)). A glycan (N-linked (GlcNAc...) asparagine) is linked at Asn44. Cysteines 45 and 111 form a disulfide.

In terms of assembly, alpha-beta TR is a heterodimer composed of an alpha and beta chain; disulfide-linked. The alpha-beta TR is associated with the transmembrane signaling CD3 coreceptor proteins to form the TR-CD3 (TcR or TCR). The assembly of alpha-beta TR heterodimers with CD3 occurs in the endoplasmic reticulum where a single alpha-beta TR heterodimer associates with one CD3D-CD3E heterodimer, one CD3G-CD3E heterodimer and one CD247 homodimer forming a stable octameric structure. CD3D-CD3E and CD3G-CD3E heterodimers preferentially associate with TR alpha and TR beta chains, respectively. The association of the CD247 homodimer is the last step of TcR assembly in the endoplasmic reticulum and is required for transport to the cell surface.

The protein resides in the cell membrane. V region of the variable domain of T cell receptor (TR) alpha chain that participates in the antigen recognition. Alpha-beta T cell receptors are antigen specific receptors which are essential to the immune response and are present on the cell surface of T lymphocytes. Recognize peptide-major histocompatibility (MH) (pMH) complexes that are displayed by antigen presenting cells (APC), a prerequisite for efficient T cell adaptive immunity against pathogens. Binding of alpha-beta TR to pMH complex initiates TR-CD3 clustering on the cell surface and intracellular activation of LCK that phosphorylates the ITAM motifs of CD3G, CD3D, CD3E and CD247 enabling the recruitment of ZAP70. In turn ZAP70 phosphorylates LAT, which recruits numerous signaling molecules to form the LAT signalosome. The LAT signalosome propagates signal branching to three major signaling pathways, the calcium, the mitogen-activated protein kinase (MAPK) kinase and the nuclear factor NF-kappa-B (NF-kB) pathways, leading to the mobilization of transcription factors that are critical for gene expression and essential for T cell growth and differentiation. The T cell repertoire is generated in the thymus, by V-(D)-J rearrangement. This repertoire is then shaped by intrathymic selection events to generate a peripheral T cell pool of self-MH restricted, non-autoaggressive T cells. Post-thymic interaction of alpha-beta TR with the pMH complexes shapes TR structural and functional avidity. The polypeptide is T cell receptor alpha variable 12-3 (Homo sapiens (Human)).